We begin with the raw amino-acid sequence, 752 residues long: Probable beta-glucosidase D (752 aa).

A signal peptide spans 1–18 (MRFVSLAVGAALLGAAGA). Asn-187 and Asn-237 each carry an N-linked (GlcNAc...) asparagine glycan. Asp-265 is a catalytic residue. N-linked (GlcNAc...) asparagine glycosylation is found at Asn-299, Asn-343, Asn-441, Asn-510, Asn-532, Asn-571, Asn-586, Asn-638, Asn-661, and Asn-743.

This sequence belongs to the glycosyl hydrolase 3 family.

The protein resides in the secreted. It catalyses the reaction Hydrolysis of terminal, non-reducing beta-D-glucosyl residues with release of beta-D-glucose.. It functions in the pathway glycan metabolism; cellulose degradation. In terms of biological role, beta-glucosidases are one of a number of cellulolytic enzymes involved in the degradation of cellulosic biomass. Catalyzes the last step releasing glucose from the inhibitory cellobiose. The sequence is that of Probable beta-glucosidase D (bglD) from Aspergillus oryzae (strain ATCC 42149 / RIB 40) (Yellow koji mold).